The primary structure comprises 186 residues: Methylamine dehydrogenase light chain (186 aa).

The segment at residues 1 to 57 is a signal peptide (tat-type signal); that stretch reads MKKNTGFDSGIEKLARKTASKTGRRSFIGKLGGFLVGSALLPLLPVDRRGRMNEAHA. Cystine bridges form between Cys78/Cys143, Cys84/Cys116, Cys91/Cys176, Cys93/Cys141, Cys101/Cys132, and Cys133/Cys164. Trp112 carries the post-translational modification Tryptophylquinone. Residues 112 to 163 constitute a cross-link (tryptophan tryptophylquinone (Trp-Trp)); it reads WVASCFNPGDGQTYLIAYRDCCGKQTCGRCNCVNVQGELPVYRPEFNNDIVW.

This sequence belongs to the aromatic amine dehydrogenase light chain family. Heterotetramer of two light and two heavy chains. Tryptophan tryptophylquinone residue serves as cofactor. Predicted to be exported by the Tat system. The position of the signal peptide cleavage has not been experimentally proven. In terms of processing, tryptophan tryptophylquinone (TTQ) is formed by oxidation of the indole ring of a tryptophan to form tryptophylquinone followed by covalent cross-linking with another tryptophan residue.

The protein localises to the periplasm. The catalysed reaction is 2 oxidized [amicyanin] + methylamine + H2O = 2 reduced [amicyanin] + formaldehyde + NH4(+) + 2 H(+). It functions in the pathway one-carbon metabolism; methylamine degradation; formaldehyde from methylamine: step 1/1. Functionally, methylamine dehydrogenase carries out the oxidation of methylamine. Electrons are passed from methylamine dehydrogenase to amicyanin. The polypeptide is Methylamine dehydrogenase light chain (mauA) (Methylobacillus flagellatus (strain ATCC 51484 / DSM 6875 / VKM B-1610 / KT)).